We begin with the raw amino-acid sequence, 148 residues long: Small ribosomal subunit protein eS6 (148 aa).

Belongs to the eukaryotic ribosomal protein eS6 family.

The chain is Small ribosomal subunit protein eS6 from Pyrobaculum arsenaticum (strain DSM 13514 / JCM 11321 / PZ6).